Here is a 428-residue protein sequence, read N- to C-terminus: UPF0229 protein YeaH (428 aa).

Positions 77 to 90 (PGNDHFIQNDRIER) are enriched in basic and acidic residues. A disordered region spans residues 77–111 (PGNDHFIQNDRIERPQSGGGGGSGSGQGQASQDGE). Residues 93 to 103 (SGGGGGSGSGQ) show a composition bias toward gly residues.

Belongs to the UPF0229 family.

In Salmonella typhi, this protein is UPF0229 protein YeaH.